A 196-amino-acid polypeptide reads, in one-letter code: dTTP/UTP pyrophosphatase (196 aa).

Asp72 serves as the catalytic Proton acceptor.

Belongs to the Maf family. YhdE subfamily. A divalent metal cation is required as a cofactor.

It is found in the cytoplasm. The enzyme catalyses dTTP + H2O = dTMP + diphosphate + H(+). It carries out the reaction UTP + H2O = UMP + diphosphate + H(+). Its function is as follows. Nucleoside triphosphate pyrophosphatase that hydrolyzes dTTP and UTP. May have a dual role in cell division arrest and in preventing the incorporation of modified nucleotides into cellular nucleic acids. The polypeptide is dTTP/UTP pyrophosphatase (Chlamydia caviae (strain ATCC VR-813 / DSM 19441 / 03DC25 / GPIC) (Chlamydophila caviae)).